A 240-amino-acid polypeptide reads, in one-letter code: Large ribosomal subunit protein uL2 (240 aa).

Positions 1 to 11 (MGKRLISQNRG) are enriched in polar residues. Disordered regions lie at residues 1–26 (MGKRLISQNRGRGTPKYRSPSHKRKG) and 206–240 (GGGRHQHLGKPSSVSRNTSPGRKVGHIASRRTGRK). Composition is skewed to basic residues over residues 13–26 (GTPKYRSPSHKRKG) and 228–240 (KVGHIASRRTGRK).

The protein belongs to the universal ribosomal protein uL2 family. As to quaternary structure, part of the 50S ribosomal subunit. Forms a bridge to the 30S subunit in the 70S ribosome.

One of the primary rRNA binding proteins. Required for association of the 30S and 50S subunits to form the 70S ribosome, for tRNA binding and peptide bond formation. It has been suggested to have peptidyltransferase activity; this is somewhat controversial. Makes several contacts with the 16S rRNA in the 70S ribosome. The polypeptide is Large ribosomal subunit protein uL2 (Methanococcus vannielii (strain ATCC 35089 / DSM 1224 / JCM 13029 / OCM 148 / SB)).